Reading from the N-terminus, the 1028-residue chain is Golgin subfamily A member 2 (1028 aa).

Residues 1–112 form a disordered region; the sequence is MADQNRQIKL…NRPLSSTESL (112 aa). Residues 40–60 are compositionally biased toward basic and acidic residues; it reads KGDQTDAPADRRSPENERVDV. Over residues 74–87 the composition is skewed to polar residues; it reads NPASAINTDNSAPQ. 5 coiled-coil regions span residues 162 to 200, 233 to 388, 414 to 690, 738 to 769, and 799 to 840; these read NTQL…EQGA, ARQK…YAVQ, RDST…LLNG, LSRV…LTAL, and HEAL…LSGE. The segment at 259–280 is disordered; sequence RTLSSVSTQQKQHERHNKELEK. A disordered region spans residues 756–791; it reads RRIHQDTRQQLTALSHDHHHHHHHEPHSTCAETDGS. Positions 944–981 are disordered; it reads AMDVSSSPQSSTAEIQSQSSERPAADPISSPSLRPQED. Residues 945 to 964 show a composition bias toward polar residues; it reads MDVSSSPQSSTAEIQSQSSE.

It belongs to the GOLGA2 family.

Its subcellular location is the golgi apparatus. The protein resides in the cis-Golgi network membrane. It is found in the endoplasmic reticulum-Golgi intermediate compartment membrane. The protein localises to the cytoplasm. It localises to the cytoskeleton. Its subcellular location is the spindle pole. Peripheral membrane component of the cis-Golgi stack that acts as a membrane skeleton that maintains the structure of the Golgi apparatus, and as a vesicle thether that facilitates vesicle fusion to the Golgi membrane. Required for normal protein transport from the endoplasmic reticulum to the Golgi apparatus and the cell membrane. Plays a central role in mitotic Golgi disassembly. Also plays a key role in spindle pole assembly and centrosome organization. It probably promotes mitotic spindle pole assembly by activating assembly factors to nucleate microtubules around the Golgi and capture them to couple mitotic membranes to the spindle. Also required for the Golgi ribbon formation and glycosylation of membrane and secretory proteins. This is Golgin subfamily A member 2 from Danio rerio (Zebrafish).